A 328-amino-acid chain; its full sequence is Mitochondrial GTPase 1 (328 aa).

The CP-type G domain maps to 10–199; that stretch reads KTTLKRLRDS…MVDTPGIMLP (190 aa). GTP-binding positions include 57-60, 143-148, and G195; these read NKCD and NVGKSS.

It belongs to the TRAFAC class YlqF/YawG GTPase family. MTG1 subfamily.

The protein resides in the mitochondrion inner membrane. In terms of biological role, mitochondrial GTPase involved in assembly of the large ribosomal subunit. Plays a role in expression of the mitochondrial translational machinery. This is Mitochondrial GTPase 1 from Schizosaccharomyces japonicus (strain yFS275 / FY16936) (Fission yeast).